The chain runs to 505 residues: uncharacterized protein (505 aa).

The Radical SAM core domain occupies 193-440; sequence CTNKKCNLCE…LEIKKKYIGR (248 aa). The [4Fe-4S] cluster site is built by Cys-208, Cys-216, and Cys-219. Residues 435-499 form the TRAM domain; that stretch reads KKYIGRVLEV…EKYLEGRILK (65 aa).

The cofactor is [4Fe-4S] cluster.

This is an uncharacterized protein from Methanocaldococcus jannaschii (strain ATCC 43067 / DSM 2661 / JAL-1 / JCM 10045 / NBRC 100440) (Methanococcus jannaschii).